We begin with the raw amino-acid sequence, 207 residues long: Phosphoenolpyruvate guanylyltransferase (207 aa).

Thr-137, Gly-153, and Ser-156 together coordinate phosphoenolpyruvate.

It belongs to the CofC family.

The catalysed reaction is phosphoenolpyruvate + GTP + H(+) = enolpyruvoyl-2-diphospho-5'-guanosine + diphosphate. It participates in cofactor biosynthesis; coenzyme F420 biosynthesis. Guanylyltransferase that catalyzes the activation of phosphoenolpyruvate (PEP) as enolpyruvoyl-2-diphospho-5'-guanosine, via the condensation of PEP with GTP. It is involved in the biosynthesis of coenzyme F420, a hydride carrier cofactor. This Sphaerobacter thermophilus (strain ATCC 49802 / DSM 20745 / KCCM 41009 / NCIMB 13125 / S 6022) protein is Phosphoenolpyruvate guanylyltransferase.